The following is a 66-amino-acid chain: Cocaine- and amphetamine-regulated transcript protein (66 aa).

2 disulfides stabilise this stretch: Cys-34-Cys-52 and Cys-40-Cys-60.

The protein belongs to the CART family.

It localises to the secreted. Satiety factor closely associated with the actions of leptin and neuropeptide y; this anorectic peptide inhibits both normal and starvation-induced feeding and completely blocks the feeding response induced by neuropeptide Y and regulated by leptin in the hypothalamus. The protein is Cocaine- and amphetamine-regulated transcript protein (CARTPT) of Sus scrofa (Pig).